We begin with the raw amino-acid sequence, 250 residues long: MTALLGPDQLEADLRAIGARLYHDQHPFHALLHHGKLDRGQVQAWALNRFEYQRCIPLKDAAILARMEDPALRRIWRQRILDHDGNSASDGGIARWLHLTDALGLDRTLVESGRALLPGTRFAVQAYLHFVREKSLLEAIASSLTELFAPNIIGQRVAGMLKHYDFVSSEALAYFEHRLTEAPRDSDFALDYVKQHADTVEKQALVKAALHFKCSVLWAQLDALHVAYVAPGIVWPDAFVPDRDASRVAA.

The protein belongs to the PqqC family.

The catalysed reaction is 6-(2-amino-2-carboxyethyl)-7,8-dioxo-1,2,3,4,7,8-hexahydroquinoline-2,4-dicarboxylate + 3 O2 = pyrroloquinoline quinone + 2 H2O2 + 2 H2O + H(+). It participates in cofactor biosynthesis; pyrroloquinoline quinone biosynthesis. Functionally, ring cyclization and eight-electron oxidation of 3a-(2-amino-2-carboxyethyl)-4,5-dioxo-4,5,6,7,8,9-hexahydroquinoline-7,9-dicarboxylic-acid to PQQ. The chain is Pyrroloquinoline-quinone synthase from Xanthomonas axonopodis pv. citri (strain 306).